Consider the following 229-residue polypeptide: Glycerol-3-phosphate acyltransferase (229 aa).

6 consecutive transmembrane segments (helical) span residues 2–22, 56–76, 93–113, 129–149, 151–171, and 178–198; these read WSLTVILLISYFLGSIPGALW, LATVVDFGKGFLAAGVVASVI, FVVLGLLAGVGAVIGHMYPIF, LFALTPLTMAITLAVFVAVLL, SRYVSLSSITAAVAFPTIVAL, and ADLDPSLLVFGGLLALSIVVA.

This sequence belongs to the PlsY family. In terms of assembly, probably interacts with PlsX.

The protein localises to the cell inner membrane. It catalyses the reaction an acyl phosphate + sn-glycerol 3-phosphate = a 1-acyl-sn-glycero-3-phosphate + phosphate. It participates in lipid metabolism; phospholipid metabolism. Catalyzes the transfer of an acyl group from acyl-phosphate (acyl-PO(4)) to glycerol-3-phosphate (G3P) to form lysophosphatidic acid (LPA). This enzyme utilizes acyl-phosphate as fatty acyl donor, but not acyl-CoA or acyl-ACP. This chain is Glycerol-3-phosphate acyltransferase, found in Salinibacter ruber (strain DSM 13855 / M31).